Reading from the N-terminus, the 137-residue chain is ATP synthase epsilon chain (137 aa).

Belongs to the ATPase epsilon chain family. As to quaternary structure, F-type ATPases have 2 components, CF(1) - the catalytic core - and CF(0) - the membrane proton channel. CF(1) has five subunits: alpha(3), beta(3), gamma(1), delta(1), epsilon(1). CF(0) has three main subunits: a, b and c.

The protein localises to the cell membrane. Produces ATP from ADP in the presence of a proton gradient across the membrane. The chain is ATP synthase epsilon chain from Mycoplasmopsis synoviae (strain 53) (Mycoplasma synoviae).